We begin with the raw amino-acid sequence, 381 residues long: Dual-specificity RNA methyltransferase RlmN (381 aa).

The active-site Proton acceptor is the glutamate 96. In terms of domain architecture, Radical SAM core spans 102 to 342; the sequence is TDDRGTLCVS…TRTTRGDDID (241 aa). The cysteines at positions 109 and 345 are disulfide-linked. Residues cysteine 116, cysteine 120, and cysteine 123 each contribute to the [4Fe-4S] cluster site. S-adenosyl-L-methionine is bound by residues 170 to 171, serine 202, 224 to 226, and asparagine 302; these read GE and SLH. Cysteine 345 functions as the S-methylcysteine intermediate in the catalytic mechanism.

It belongs to the radical SAM superfamily. RlmN family. [4Fe-4S] cluster is required as a cofactor.

The protein resides in the cytoplasm. It carries out the reaction adenosine(2503) in 23S rRNA + 2 reduced [2Fe-2S]-[ferredoxin] + 2 S-adenosyl-L-methionine = 2-methyladenosine(2503) in 23S rRNA + 5'-deoxyadenosine + L-methionine + 2 oxidized [2Fe-2S]-[ferredoxin] + S-adenosyl-L-homocysteine. The catalysed reaction is adenosine(37) in tRNA + 2 reduced [2Fe-2S]-[ferredoxin] + 2 S-adenosyl-L-methionine = 2-methyladenosine(37) in tRNA + 5'-deoxyadenosine + L-methionine + 2 oxidized [2Fe-2S]-[ferredoxin] + S-adenosyl-L-homocysteine. Functionally, specifically methylates position 2 of adenine 2503 in 23S rRNA and position 2 of adenine 37 in tRNAs. m2A2503 modification seems to play a crucial role in the proofreading step occurring at the peptidyl transferase center and thus would serve to optimize ribosomal fidelity. This is Dual-specificity RNA methyltransferase RlmN from Pseudomonas putida (strain W619).